Consider the following 360-residue polypeptide: UDP-N-acetylglucosamine--N-acetylmuramyl-(pentapeptide) pyrophosphoryl-undecaprenol N-acetylglucosamine transferase (360 aa).

UDP-N-acetyl-alpha-D-glucosamine is bound by residues T12–G14, N124, R161, S189, I243, and Q288.

The protein belongs to the glycosyltransferase 28 family. MurG subfamily.

The protein resides in the cell inner membrane. The enzyme catalyses di-trans,octa-cis-undecaprenyl diphospho-N-acetyl-alpha-D-muramoyl-L-alanyl-D-glutamyl-meso-2,6-diaminopimeloyl-D-alanyl-D-alanine + UDP-N-acetyl-alpha-D-glucosamine = di-trans,octa-cis-undecaprenyl diphospho-[N-acetyl-alpha-D-glucosaminyl-(1-&gt;4)]-N-acetyl-alpha-D-muramoyl-L-alanyl-D-glutamyl-meso-2,6-diaminopimeloyl-D-alanyl-D-alanine + UDP + H(+). Its pathway is cell wall biogenesis; peptidoglycan biosynthesis. Cell wall formation. Catalyzes the transfer of a GlcNAc subunit on undecaprenyl-pyrophosphoryl-MurNAc-pentapeptide (lipid intermediate I) to form undecaprenyl-pyrophosphoryl-MurNAc-(pentapeptide)GlcNAc (lipid intermediate II). The sequence is that of UDP-N-acetylglucosamine--N-acetylmuramyl-(pentapeptide) pyrophosphoryl-undecaprenol N-acetylglucosamine transferase from Acidithiobacillus ferrooxidans (strain ATCC 23270 / DSM 14882 / CIP 104768 / NCIMB 8455) (Ferrobacillus ferrooxidans (strain ATCC 23270)).